A 469-amino-acid polypeptide reads, in one-letter code: Protein RUFY3 (469 aa).

2 positions are modified to phosphothreonine: Thr-5 and Thr-12. Phosphoserine is present on residues Tyr-27, Ser-34, and Ser-49. A Phosphothreonine modification is found at Thr-51. Asp-53 carries the phosphoserine modification. In terms of domain architecture, RUN spans 95–227 (DSDYAPLQQF…IDANFCMKGE (133 aa)). Coiled coils occupy residues 271–362 (NRHL…VEKE) and 422–463 (KSEL…AANK). Over residues 321 to 337 (SYLLESNRKGPKQDRTA) the composition is skewed to basic and acidic residues. The interval 321–342 (SYLLESNRKGPKQDRTAEGQAL) is disordered.

As to quaternary structure, interacts with PAK1. Interacts (via C-terminus) with Ras-related Rab-5 proteins. Interacts (via C-terminus) with Ras-related Rap-2 proteins. Interacts with PIK3CA and PIK3R1. Interacts (via N-terminus) with FSCN1; this interaction induces neuron axon development. Interacts with DBN1. Interacts (via the second coiled coil) with GTP-, but not GDP-bound ARL8A and ARL8B. Interacts with dynactin/DCTN1 and the dynein intermediate chain DYNC1I1/2. Directly interacts with DYNC1LI1. Post-translationally, phosphorylated by PAK1. Isoform 1 is partially phosphorylated. As to expression, expressed in brain (at protein level).

It localises to the cytoplasm. The protein localises to the endomembrane system. The protein resides in the cell projection. It is found in the invadopodium. Its subcellular location is the growth cone. It localises to the perikaryon. The protein localises to the filopodium. The protein resides in the lamellipodium. It is found in the lysosome. ARL8 effector that promotes the coupling of endolysosomes to dynein-dynactin for retrograde transport along microtubules. Acts by binding both GTP-bound ARL8 and dynein-dynactin. In nonneuronal cells, promotes concentration of endolysosomes in the juxtanuclear area. In hippocampal neurons, drives retrograde transport of endolysosomes from the axon to the soma. Plays a role in the generation of neuronal polarity formation and axon growth. Implicated in the formation of a single axon by developing neurons. May inhibit the formation of additional axons by inhibition of PI3K in minor neuronal processes. Plays a role in the formation of F-actin-enriched protrusive structures at the cell periphery. Plays a role in cytoskeletal organization by regulating the subcellular localization of FSCN1 and DBN1 at axonal growth cones. The protein is Protein RUFY3 of Mus musculus (Mouse).